Here is a 383-residue protein sequence, read N- to C-terminus: MTIRKSNPYLSLVNSYLMDSPQPSSMNYWWNVGSLLGLCLVMQMASGMFLAMHYSSSMELAFNSVEHMMRDVNAGWLMRYIHANGASFFFMCLYLHMGKALYYGSYKSPRVLVWSMGVMMFMLTMATAFMGYCLVYGQMSHWGATVITNLLSAMPFMGGDLVPFIWGGFSVSNPTMQRFFALHYLLPFILAALVVMHFMALHVHGSSNPMGMSGNMDRLPMHGYFVFKDLMTVFVFILMFSLFVFYSPNTLGHSDNYMPANPMVTPPSIVPEWYLLPFYAMLRSMPDKLGGVMAMFAALLMLLMLPMTDRSVMRGNTFKMLSKLSFYLFLFNFFLLMNMGQLHVEVPFIELGQFATVYYFSYFLMLVPVMSSMENMLFYMGNK.

A run of 4 helical transmembrane segments spans residues 32 to 52 (VGSL…FLAM), 76 to 98 (WLMR…LHMG), 113 to 133 (VWSM…MGYC), and 179 to 199 (FFAL…MHFM). 2 residues coordinate heme b: His82 and His96. Positions 183 and 197 each coordinate heme b. His202 is a binding site for a ubiquinone. 4 helical membrane-spanning segments follow: residues 225–245 (FVFK…LFVF), 289–309 (LGGV…PMTD), 321–341 (LSKL…NMGQ), and 348–368 (FIEL…MLVP).

This sequence belongs to the cytochrome b family. Fungal cytochrome b-c1 complex contains 10 subunits; 3 respiratory subunits, 2 core proteins and 5 low-molecular weight proteins. Cytochrome b-c1 complex is a homodimer. Requires heme b as cofactor.

Its subcellular location is the mitochondrion inner membrane. Component of the ubiquinol-cytochrome c reductase complex (complex III or cytochrome b-c1 complex) that is part of the mitochondrial respiratory chain. The b-c1 complex mediates electron transfer from ubiquinol to cytochrome c. Contributes to the generation of a proton gradient across the mitochondrial membrane that is then used for ATP synthesis. The protein is Cytochrome b (COB) of Debaryomyces hansenii (strain ATCC 36239 / CBS 767 / BCRC 21394 / JCM 1990 / NBRC 0083 / IGC 2968) (Yeast).